Here is a 217-residue protein sequence, read N- to C-terminus: Adenylate kinase (217 aa).

10 to 15 is a binding site for ATP; sequence GAGKGT. Residues 30-59 are NMP; the sequence is STGDILRAAVSEMTPMGVKAKGYMESGALV. AMP contacts are provided by residues threonine 31, arginine 36, 57–59, 85–88, and glutamine 92; these read ALV and GFPR. The segment at 126-163 is LID; it reads GRRTCRLCGKGYHVVFDPPRVSGRCDECLGELFQRDDD. Arginine 127 serves as a coordination point for ATP. Zn(2+) is bound by residues cysteine 130, cysteine 133, cysteine 150, and cysteine 153. Arginine 160 and arginine 171 together coordinate AMP. Glycine 199 contributes to the ATP binding site.

The protein belongs to the adenylate kinase family. As to quaternary structure, monomer.

It localises to the cytoplasm. It carries out the reaction AMP + ATP = 2 ADP. It participates in purine metabolism; AMP biosynthesis via salvage pathway; AMP from ADP: step 1/1. In terms of biological role, catalyzes the reversible transfer of the terminal phosphate group between ATP and AMP. Plays an important role in cellular energy homeostasis and in adenine nucleotide metabolism. The polypeptide is Adenylate kinase (Geotalea uraniireducens (strain Rf4) (Geobacter uraniireducens)).